The following is a 120-amino-acid chain: Glycine cleavage system H protein (120 aa).

A Lipoyl-binding domain is found at 17–99; the sequence is IATVGITAHA…RGAGWFFKLK (83 aa). An N6-lipoyllysine modification is found at Lys58.

This sequence belongs to the GcvH family. In terms of assembly, the glycine cleavage system is composed of four proteins: P, T, L and H. (R)-lipoate serves as cofactor.

The glycine cleavage system catalyzes the degradation of glycine. The H protein shuttles the methylamine group of glycine from the P protein to the T protein. The sequence is that of Glycine cleavage system H protein from Allorhizobium ampelinum (strain ATCC BAA-846 / DSM 112012 / S4) (Agrobacterium vitis (strain S4)).